Reading from the N-terminus, the 130-residue chain is Serum amyloid A-4 protein (130 aa).

Positions 1–18 are cleaved as a signal peptide; the sequence is MRLATVIVLCSLFLGVSG. Positions 109–130 are disordered; that stretch reads EEWGRSGKNPNHFRPEGLPEKF. The span at 121 to 130 shows a compositional bias: basic and acidic residues; sequence FRPEGLPEKF.

This sequence belongs to the SAA family. Apolipoprotein of the HDL complex. As to expression, expressed by the liver; secreted in plasma.

Its subcellular location is the secreted. Major acute phase reactant. The sequence is that of Serum amyloid A-4 protein from Mus musculus (Mouse).